A 226-amino-acid polypeptide reads, in one-letter code: Octanoyltransferase (226 aa).

A BPL/LPL catalytic domain is found at 34–216; sequence GEANELVWLL…AWTEAFGPVR (183 aa). Substrate contacts are provided by residues 73–80, 145–147, and 158–160; these read RGGEYTYH, AIG, and GIA. The active-site Acyl-thioester intermediate is the cysteine 176.

It belongs to the LipB family.

It is found in the cytoplasm. The enzyme catalyses octanoyl-[ACP] + L-lysyl-[protein] = N(6)-octanoyl-L-lysyl-[protein] + holo-[ACP] + H(+). It functions in the pathway protein modification; protein lipoylation via endogenous pathway; protein N(6)-(lipoyl)lysine from octanoyl-[acyl-carrier-protein]: step 1/2. In terms of biological role, catalyzes the transfer of endogenously produced octanoic acid from octanoyl-acyl-carrier-protein onto the lipoyl domains of lipoate-dependent enzymes. Lipoyl-ACP can also act as a substrate although octanoyl-ACP is likely to be the physiological substrate. In Maricaulis maris (strain MCS10) (Caulobacter maris), this protein is Octanoyltransferase.